We begin with the raw amino-acid sequence, 240 residues long: Homeobox protein DLX-4 (240 aa).

Residues 80 to 120 (QPLCGPAEHPQELEADSEKPRLSPEPSERRPQAPAKKLRKP) are disordered. Residues 88–110 (HPQELEADSEKPRLSPEPSERRP) show a composition bias toward basic and acidic residues. A DNA-binding region (homeobox) is located at residues 117 to 176 (LRKPRTIYSSLQLQHLNQRFQHTQYLALPERAQLAAQLGLTQTQVKIWFQNKRSKYKKLL).

The protein belongs to the distal-less homeobox family. In terms of tissue distribution, expressed in leukemia cells and placenta. Also expressed in kidney and fetal liver.

It is found in the nucleus. In terms of biological role, may play a role in determining the production of hemoglobin S. May act as a repressor. During embryonic development, plays a role in palatogenesis. This chain is Homeobox protein DLX-4 (DLX4), found in Homo sapiens (Human).